Reading from the N-terminus, the 284-residue chain is MNSFRFTKMHGLGNSYIYVNQFEEQLPEEKLSEIAIQVSSVYTGIGSDGMILICPSDQAPVKMRIFNNDGSEGKNCGNGLRCVAKYAYEHKLVEETSFLIETLSGLVKAEVQVENGKVNVVTVDMGEPRLTKSELPMLDGGEEHTINETMAFGEVELTGTAVSMGNPHIVFPIADIEQAPLTTLGPVIEKDPRFPEGINVEFVETVNEQELHFRVWERGSGITQACGTGACAAAVASVLNGVSKRNQDITVHLAGGDLVINWKDNGHVMMTGPAETVCEGVYFL.

Positions 14 and 67 each coordinate substrate. Cysteine 76 acts as the Proton donor in catalysis. Substrate-binding positions include 77 to 78 (GN), asparagine 166, asparagine 199, and 217 to 218 (ER). Cysteine 226 (proton acceptor) is an active-site residue. 227-228 (GT) is a binding site for substrate.

The protein belongs to the diaminopimelate epimerase family. Homodimer.

It localises to the cytoplasm. It catalyses the reaction (2S,6S)-2,6-diaminopimelate = meso-2,6-diaminopimelate. It functions in the pathway amino-acid biosynthesis; L-lysine biosynthesis via DAP pathway; DL-2,6-diaminopimelate from LL-2,6-diaminopimelate: step 1/1. Functionally, catalyzes the stereoinversion of LL-2,6-diaminopimelate (L,L-DAP) to meso-diaminopimelate (meso-DAP), a precursor of L-lysine and an essential component of the bacterial peptidoglycan. This is Diaminopimelate epimerase from Bacillus subtilis (strain 168).